The sequence spans 348 residues: Dihydroorotase (348 aa).

The Zn(2+) site is built by H17 and H19. Residues 19–21 (HLR) and N45 each bind substrate. Zn(2+) contacts are provided by K103, H140, and H178. At K103 the chain carries N6-carboxylysine. H140 lines the substrate pocket. L223 lines the substrate pocket. A Zn(2+)-binding site is contributed by D251. Residue D251 is part of the active site. Residues H255 and A267 each coordinate substrate.

Belongs to the metallo-dependent hydrolases superfamily. DHOase family. Class II DHOase subfamily. In terms of assembly, homodimer. Requires Zn(2+) as cofactor.

The catalysed reaction is (S)-dihydroorotate + H2O = N-carbamoyl-L-aspartate + H(+). The protein operates within pyrimidine metabolism; UMP biosynthesis via de novo pathway; (S)-dihydroorotate from bicarbonate: step 3/3. In terms of biological role, catalyzes the reversible cyclization of carbamoyl aspartate to dihydroorotate. This Salmonella heidelberg (strain SL476) protein is Dihydroorotase.